A 150-amino-acid polypeptide reads, in one-letter code: Cytochrome c oxidase subunit 5A, mitochondrial (150 aa).

The transit peptide at 1-41 (MLGAALRRCAVAATTWAGPRGHLHSARTPGPAAAIQSVRCY) directs the protein to the mitochondrion. The SIFI-degron motif lies at 2 to 17 (LGAALRRCAVAATTWA). Lysine 87 and lysine 113 each carry N6-acetyllysine. Threonine 141 bears the Phosphothreonine mark.

This sequence belongs to the cytochrome c oxidase subunit 5A family. Component of the cytochrome c oxidase (complex IV, CIV), a multisubunit enzyme composed of 14 subunits. The complex is composed of a catalytic core of 3 subunits MT-CO1, MT-CO2 and MT-CO3, encoded in the mitochondrial DNA, and 11 supernumerary subunits COX4I, COX5A, COX5B, COX6A, COX6B, COX6C, COX7A, COX7B, COX7C, COX8 and NDUFA4, which are encoded in the nuclear genome. The complex exists as a monomer or a dimer and forms supercomplexes (SCs) in the inner mitochondrial membrane with NADH-ubiquinone oxidoreductase (complex I, CI) and ubiquinol-cytochrome c oxidoreductase (cytochrome b-c1 complex, complex III, CIII), resulting in different assemblies (supercomplex SCI(1)III(2)IV(1) and megacomplex MCI(2)III(2)IV(2)). Interacts with AFG1L. Interacts with RAB5IF. In response to mitochondrial stress, the precursor protein is ubiquitinated by the SIFI complex in the cytoplasm before mitochondrial import, leading to its degradation. Within the SIFI complex, UBR4 initiates ubiquitin chain that are further elongated or branched by KCMF1.

The protein resides in the mitochondrion inner membrane. It participates in energy metabolism; oxidative phosphorylation. In terms of biological role, component of the cytochrome c oxidase, the last enzyme in the mitochondrial electron transport chain which drives oxidative phosphorylation. The respiratory chain contains 3 multisubunit complexes succinate dehydrogenase (complex II, CII), ubiquinol-cytochrome c oxidoreductase (cytochrome b-c1 complex, complex III, CIII) and cytochrome c oxidase (complex IV, CIV), that cooperate to transfer electrons derived from NADH and succinate to molecular oxygen, creating an electrochemical gradient over the inner membrane that drives transmembrane transport and the ATP synthase. Cytochrome c oxidase is the component of the respiratory chain that catalyzes the reduction of oxygen to water. Electrons originating from reduced cytochrome c in the intermembrane space (IMS) are transferred via the dinuclear copper A center (CU(A)) of subunit 2 and heme A of subunit 1 to the active site in subunit 1, a binuclear center (BNC) formed by heme A3 and copper B (CU(B)). The BNC reduces molecular oxygen to 2 water molecules using 4 electrons from cytochrome c in the IMS and 4 protons from the mitochondrial matrix. The sequence is that of Cytochrome c oxidase subunit 5A, mitochondrial (COX5A) from Symphalangus syndactylus (Siamang).